Consider the following 335-residue polypeptide: MIEADNLNVTSIITDYNPIVDYRPKKLVDYIGQTNVREQMKIFIQAAKMRGDALDHVLLFGPPGLGKTTLANIIANEMEGSLRSTSGPVLEKAGDLAAILTNLEPHDVLFIDEIHRLSPVIEEILYPAMEDYKLDIIIGEGPAARSIKIQIPPFTLVGATTRIGSITSPLRDRFGIVQRLEFYPTKDLQNIISRSAANLSLSITDGGLSEIAKRARGTPRIALRLLRRVRDFAEVRAAGKITNNVAMNALNMLNVDTAGFNFMDRQLLLVIINKFLGGPVGLDNLAAAIGEERETIEDVLEPFLIQQGFLQRTPRGRIATAEAYRHFSLKQSRDI.

Residues 4–183 form a large ATPase domain (RuvB-L) region; that stretch reads ADNLNVTSII…FGIVQRLEFY (180 aa). Residues arginine 23, glycine 64, lysine 67, threonine 68, threonine 69, 130 to 132, arginine 173, tyrosine 183, and arginine 220 each bind ATP; that span reads EDY. Threonine 68 provides a ligand contact to Mg(2+). A small ATPAse domain (RuvB-S) region spans residues 184–254; the sequence is PTKDLQNIIS…VAMNALNMLN (71 aa). A head domain (RuvB-H) region spans residues 257–335; the sequence is TAGFNFMDRQ…HFSLKQSRDI (79 aa). DNA is bound by residues arginine 293, arginine 312, and arginine 317.

The protein belongs to the RuvB family. As to quaternary structure, homohexamer. Forms an RuvA(8)-RuvB(12)-Holliday junction (HJ) complex. HJ DNA is sandwiched between 2 RuvA tetramers; dsDNA enters through RuvA and exits via RuvB. An RuvB hexamer assembles on each DNA strand where it exits the tetramer. Each RuvB hexamer is contacted by two RuvA subunits (via domain III) on 2 adjacent RuvB subunits; this complex drives branch migration. In the full resolvosome a probable DNA-RuvA(4)-RuvB(12)-RuvC(2) complex forms which resolves the HJ.

The protein localises to the cytoplasm. The enzyme catalyses ATP + H2O = ADP + phosphate + H(+). In terms of biological role, the RuvA-RuvB-RuvC complex processes Holliday junction (HJ) DNA during genetic recombination and DNA repair, while the RuvA-RuvB complex plays an important role in the rescue of blocked DNA replication forks via replication fork reversal (RFR). RuvA specifically binds to HJ cruciform DNA, conferring on it an open structure. The RuvB hexamer acts as an ATP-dependent pump, pulling dsDNA into and through the RuvAB complex. RuvB forms 2 homohexamers on either side of HJ DNA bound by 1 or 2 RuvA tetramers; 4 subunits per hexamer contact DNA at a time. Coordinated motions by a converter formed by DNA-disengaged RuvB subunits stimulates ATP hydrolysis and nucleotide exchange. Immobilization of the converter enables RuvB to convert the ATP-contained energy into a lever motion, pulling 2 nucleotides of DNA out of the RuvA tetramer per ATP hydrolyzed, thus driving DNA branch migration. The RuvB motors rotate together with the DNA substrate, which together with the progressing nucleotide cycle form the mechanistic basis for DNA recombination by continuous HJ branch migration. Branch migration allows RuvC to scan DNA until it finds its consensus sequence, where it cleaves and resolves cruciform DNA. The protein is Holliday junction branch migration complex subunit RuvB of Baumannia cicadellinicola subsp. Homalodisca coagulata.